The following is a 79-amino-acid chain: Beta-defensin 15 (79 aa).

The N-terminal stretch at 1–20 (MKTFLFLFAVLFFLDPAKNA) is a signal peptide. 3 cysteine pairs are disulfide-bonded: Cys26-Cys53, Cys33-Cys47, and Cys37-Cys54.

The protein belongs to the beta-defensin family. As to expression, expressed in testis and to a lesser extent in epididymis (caput, corpus and cauda). Also weakly expressed in kidneys and colon.

Its subcellular location is the secreted. In terms of biological role, has antibacterial activity. The sequence is that of Beta-defensin 15 (Defb15) from Mus musculus (Mouse).